A 485-amino-acid polypeptide reads, in one-letter code: GTPase Der (485 aa).

EngA-type G domains follow at residues 3–167 (PTIA…PEPE) and 176–349 (PVFA…NAAM). GTP is bound by residues 9-16 (GRPNVGKS), 56-60 (DTGGF), 119-122 (NKGE), 182-189 (GRPNVGKS), 229-233 (DTAGV), and 294-297 (NKWD). The KH-like domain occupies 350–434 (IKMPTPKITR…PLRIQYNVSE (85 aa)). The tract at residues 435–485 (NPYENAEDKPKKKPLRRVSLSNRIEKREGRKEEKNRFKKKTKVSVKKQFSK) is disordered. Over residues 457-469 (RIEKREGRKEEKN) the composition is skewed to basic and acidic residues. Residues 470-485 (RFKKKTKVSVKKQFSK) show a composition bias toward basic residues.

It belongs to the TRAFAC class TrmE-Era-EngA-EngB-Septin-like GTPase superfamily. EngA (Der) GTPase family. In terms of assembly, associates with the 50S ribosomal subunit.

Its function is as follows. GTPase that plays an essential role in the late steps of ribosome biogenesis. This Neisseria meningitidis serogroup C / serotype 2a (strain ATCC 700532 / DSM 15464 / FAM18) protein is GTPase Der.